A 139-amino-acid polypeptide reads, in one-letter code: Transcriptional regulator WhiB5 (139 aa).

Residues 4 to 77 (PCATDPELWF…AGIKLPGGQY (74 aa)) form the 4Fe-4S Wbl-type domain. [4Fe-4S] cluster-binding residues include Cys5, Cys41, Cys45, and Cys53.

It belongs to the WhiB family. The cofactor is [4Fe-4S] cluster. The Fe-S cluster can be nitrosylated by nitric oxide (NO). In terms of processing, upon Fe-S cluster removal intramolecular disulfide bonds are formed.

The protein resides in the cytoplasm. In terms of biological role, a transcription factor that is probably redox-responsive. Probably plays a role in immunomodulation and reactivation after chronic infection. Its induction results in transcription of a number of genes including sigM, and the genes for 2 type VII secretion systems ESX-2 and ESX-4. Seems to negatively regulate its own expression. The apo-form has been shown to act as a protein disulfide reductase. The apo- but not holo-form probably binds DNA. The polypeptide is Transcriptional regulator WhiB5 (whiB5) (Mycobacterium tuberculosis (strain ATCC 25618 / H37Rv)).